We begin with the raw amino-acid sequence, 431 residues long: Histidinol dehydrogenase (431 aa).

The NAD(+) site is built by Tyr-127, Gln-189, and Asn-212. Substrate-binding residues include Ser-237, Gln-259, and His-262. Zn(2+) contacts are provided by Gln-259 and His-262. Active-site proton acceptor residues include Glu-326 and His-327. The substrate site is built by His-327, Asp-360, Glu-414, and His-419. Asp-360 serves as a coordination point for Zn(2+). Residue His-419 coordinates Zn(2+).

The protein belongs to the histidinol dehydrogenase family. Zn(2+) serves as cofactor.

The catalysed reaction is L-histidinol + 2 NAD(+) + H2O = L-histidine + 2 NADH + 3 H(+). It participates in amino-acid biosynthesis; L-histidine biosynthesis; L-histidine from 5-phospho-alpha-D-ribose 1-diphosphate: step 9/9. Catalyzes the sequential NAD-dependent oxidations of L-histidinol to L-histidinaldehyde and then to L-histidine. The protein is Histidinol dehydrogenase of Xylella fastidiosa (strain 9a5c).